The primary structure comprises 493 residues: Xaa-Pro dipeptidase (493 aa).

Alanine 2 is modified (N-acetylalanine). Position 167 is a phosphoserine (serine 167). Histidine 255 lines the a dipeptide pocket. 3 residues coordinate Mn(2+): aspartate 276, aspartate 287, and histidine 370. Residue aspartate 287 coordinates a dipeptide. Residues histidine 377 and arginine 398 each contribute to the a dipeptide site. 2 residues coordinate Mn(2+): glutamate 412 and glutamate 452.

The protein belongs to the peptidase M24B family. Eukaryotic-type prolidase subfamily. In terms of assembly, homodimer. Requires Mn(2+) as cofactor.

It catalyses the reaction Xaa-L-Pro dipeptide + H2O = an L-alpha-amino acid + L-proline. Functionally, dipeptidase that catalyzes the hydrolysis of dipeptides with a prolyl (Xaa-Pro) or hydroxyprolyl residue in the C-terminal position. The preferred dipeptide substrate is Gly-Pro, but other Xaa-Pro dipeptides, such as Ala-Pro, Met-Pro, Phe-Pro, Val-Pro and Leu-Pro, can be cleaved. Plays an important role in collagen metabolism because the high level of iminoacids in collagen. This Pongo abelii (Sumatran orangutan) protein is Xaa-Pro dipeptidase (PEPD).